The following is a 1116-amino-acid chain: Eukaryotic translation initiation factor 2-alpha kinase 3 (1116 aa).

An N-terminal signal peptide occupies residues 1–29; sequence MERAISPGLLVRALLLLLLLLGLAARTVA. The Lumenal portion of the chain corresponds to 30–514; sequence AGRARGLPAP…HYNKNIRKKD (485 aa). Residues 77 to 101 form a disordered region; the sequence is ALPAAAGEQEPRGPEPDDETELRPR. N-linked (GlcNAc...) asparagine glycosylation is present at N258. The helical transmembrane segment at 515–535 threads the bilayer; that stretch reads PVLLLHWWKEIVATILFCIIA. At 536-1116 the chain is on the cytoplasmic side; it reads TTFIVRRLFH…NNSHSPLPSN (581 aa). The interval 550–571 is disordered; the sequence is RQRKESETQCQTENKYDSVSGE. The Protein kinase domain maps to 593-1077; it reads FEPIQCLGRG…AINIIENAVF (485 aa). 599–607 is an ATP binding site; it reads LGRGGFGVV. Position 619 is a phosphotyrosine; by autocatalysis (Y619). Position 622 (K622) interacts with ATP. The insert loop stretch occupies residues 647–888; the sequence is EHPGIVRYFN…SPKVYLYIQM (242 aa). S715 bears the Phosphoserine mark. T802 is modified (phosphothreonine). Positions 841 to 863 are disordered; that stretch reads KPTSSKSSSEATLSISPPRPTTL. Low complexity predominate over residues 844–856; that stretch reads SSKSSSEATLSIS. D937 functions as the Proton acceptor in the catalytic mechanism. A Phosphothreonine modification is found at T982. Residues 1090–1116 form a disordered region; that stretch reads QRSRSLSSSGTKHSRQSNNSHSPLPSN. A Phosphoserine modification is found at S1094. Residues 1105 to 1116 show a composition bias toward polar residues; that stretch reads QSNNSHSPLPSN.

The protein belongs to the protein kinase superfamily. Ser/Thr protein kinase family. GCN2 subfamily. In terms of assembly, forms dimers with HSPA5/BIP in resting cells. Homotetramerizes in response to endoplasmic reticulum (ER) stress, leading to its activation. Interacts with HSP90B1/GRP94. Interacts with DNAJC3; inhibiting EIF2AK3/PERK activity. Interacts with ATAD3A; ATAD3A and EIF2S1/eIF-2-alpha occupy a common binding site within the cytoplasmic loop of EIF2AK3/PERK, leading to prevent EIF2AK3/PERK association with its substrate EIF2S1/eIF-2-alpha. Interacts with MFN2. Interacts with TMEM33. Interacts with PDIA6. Interacts with LACC1. Post-translationally, oligomerization of the N-terminal ER luminal domain by ER stress promotes EIF2AK3/PERK trans-autophosphorylation of the C-terminal cytoplasmic kinase domain at multiple residues including Thr-982 on the kinase activation loop. Autophosphorylated at Tyr-619 following endoplasmic reticulum stress, leading to activate its activity. Dephosphorylated at Tyr-619 by PTPN1/PTP1B, leading to inactivate its enzyme activity. Phosphorylation at Thr-802 by AKT (AKT1, AKT2 and/or AKT3) inactivates EIF2AK3/PERK. ADP-ribosylated by PARP16 upon ER stress, which increases kinase activity. As to expression, ubiquitous. A high level expression is seen in secretory tissues.

Its subcellular location is the endoplasmic reticulum membrane. The enzyme catalyses L-seryl-[protein] + ATP = O-phospho-L-seryl-[protein] + ADP + H(+). The catalysed reaction is L-threonyl-[protein] + ATP = O-phospho-L-threonyl-[protein] + ADP + H(+). It carries out the reaction L-tyrosyl-[protein] + ATP = O-phospho-L-tyrosyl-[protein] + ADP + H(+). Its activity is regulated as follows. Inhibited by HSPA5/BIP in absence of stress. Perturbation in protein folding in the endoplasmic reticulum (ER) promotes reversible dissociation from HSPA5/BIP and oligomerization, resulting in trans-autophosphorylation and kinase activity induction. Inactivated following phosphorylation at Thr-802 by AKT (AKT1, AKT2 and/or AKT3). Inhibited by ATAD3A at mitochondria-endoplasmic reticulum contact sites, providing a safe haven for mitochondrial protein translation during ER stress. Metabolic-stress sensing protein kinase that phosphorylates the alpha subunit of eukaryotic translation initiation factor 2 (EIF2S1/eIF-2-alpha) in response to various stress, such as unfolded protein response (UPR). Key effector of the integrated stress response (ISR) to unfolded proteins: EIF2AK3/PERK specifically recognizes and binds misfolded proteins, leading to its activation and EIF2S1/eIF-2-alpha phosphorylation. EIF2S1/eIF-2-alpha phosphorylation in response to stress converts EIF2S1/eIF-2-alpha in a global protein synthesis inhibitor, leading to a global attenuation of cap-dependent translation, while concomitantly initiating the preferential translation of ISR-specific mRNAs, such as the transcriptional activators ATF4 and QRICH1, and hence allowing ATF4- and QRICH1-mediated reprogramming. The EIF2AK3/PERK-mediated unfolded protein response increases mitochondrial oxidative phosphorylation by promoting ATF4-mediated expression of COX7A2L/SCAF1, thereby increasing formation of respiratory chain supercomplexes. In contrast to most subcellular compartments, mitochondria are protected from the EIF2AK3/PERK-mediated unfolded protein response due to EIF2AK3/PERK inhibition by ATAD3A at mitochondria-endoplasmic reticulum contact sites. In addition to EIF2S1/eIF-2-alpha, also phosphorylates NFE2L2/NRF2 in response to stress, promoting release of NFE2L2/NRF2 from the BCR(KEAP1) complex, leading to nuclear accumulation and activation of NFE2L2/NRF2. Serves as a critical effector of unfolded protein response (UPR)-induced G1 growth arrest due to the loss of cyclin-D1 (CCND1). Involved in control of mitochondrial morphology and function. This chain is Eukaryotic translation initiation factor 2-alpha kinase 3, found in Homo sapiens (Human).